A 182-amino-acid polypeptide reads, in one-letter code: Ribosome maturation factor RimM (182 aa).

Positions 102–182 (EEGDYYWKDL…TIEVDWDPGF (81 aa)) constitute a PRC barrel domain.

The protein belongs to the RimM family. In terms of assembly, binds ribosomal protein uS19.

Its subcellular location is the cytoplasm. In terms of biological role, an accessory protein needed during the final step in the assembly of 30S ribosomal subunit, possibly for assembly of the head region. Essential for efficient processing of 16S rRNA. May be needed both before and after RbfA during the maturation of 16S rRNA. It has affinity for free ribosomal 30S subunits but not for 70S ribosomes. The polypeptide is Ribosome maturation factor RimM (Salmonella enteritidis PT4 (strain P125109)).